Reading from the N-terminus, the 514-residue chain is FAD-dependent monooxygenase AacuC (514 aa).

Residues 1-29 form a disordered region; sequence MVSNEYLTHGDKDEFDPAKWSSTPGELPP. Over residues 8 to 17 the composition is skewed to basic and acidic residues; it reads THGDKDEFDP. FAD contacts are provided by valine 79 and arginine 146. Arginine 227 is a catalytic residue. Aspartate 358 and glycine 371 together coordinate FAD.

The protein belongs to the paxM FAD-dependent monooxygenase family. The cofactor is FAD.

Its pathway is secondary metabolite biosynthesis. In terms of biological role, FAD-dependent monooxygenase; part of the gene cluster that mediates the biosynthesis of the tetrahydroxanthone dimer secalonic acid D. The pathway begins with the synthesis of atrochrysone thioester by the polyketide synthase AacuL. The atrochrysone carboxyl ACP thioesterase AacuM then breaks the thioester bond and releases the atrochrysone carboxylic acid from AacuL. Atrochrysone carboxylic acid is decarboxylated by the decarboxylase AacuI, and oxidized by the anthrone oxygenase AacuG to yield emodin. Emodin is then reduced to emodin hydroquinone by a yet unidentified oxidoreductase. A-ring reduction by the short chain dehydrogenase AacuN, dehydration by the scytalone dehydratase-like protein AacuK and probable spontaneous re-oxidation, results in overall deoxygenation to chrysophanol. Baeyer-Villiger oxidation by the Baeyer-Villiger monooxygenase (BVMO) AacuH then yields monodictyphenone. Monodictyphenone is transformed into compounds with the tetrahydroxanthone skeleton via methylesterification by the methyltransferase AacuQ, followed by the action of the flavin-dependent monooxygenase AacuC, the isomerase AacuP, and the short chain dehydrogenase/reductase AacuF or AacuD. AacuF and AacuD should accept the same compound as a substrate but perform the ketoreduction with a different stereoselectivity, thus yielding blennolides B and A, respectively. In the final step of the biosynthesis, the cytochrome P450 monooxygenase AacuE accepts blennolide B and/or blennolide A to conduct the dimerization reaction to furnish the tetrahydroxanthone dimers, secalonic acids D, B, and F. The sequence is that of FAD-dependent monooxygenase AacuC from Aspergillus aculeatus (strain ATCC 16872 / CBS 172.66 / WB 5094).